A 37-amino-acid polypeptide reads, in one-letter code: Large ribosomal subunit protein bL36c (37 aa).

It belongs to the bacterial ribosomal protein bL36 family.

It localises to the plastid. Its subcellular location is the chloroplast. This Bigelowiella natans (Pedinomonas minutissima) protein is Large ribosomal subunit protein bL36c.